A 163-amino-acid chain; its full sequence is Phosphopantetheine adenylyltransferase (163 aa).

Position 9 (Ser9) interacts with substrate. Residues 9–10 (SF) and His17 each bind ATP. 3 residues coordinate substrate: Lys41, Ile75, and Arg89. ATP-binding positions include 90 to 92 (GIR), Glu100, and 125 to 131 (HLYVRSD).

The protein belongs to the bacterial CoaD family. In terms of assembly, homohexamer. Mg(2+) serves as cofactor.

It localises to the cytoplasm. It catalyses the reaction (R)-4'-phosphopantetheine + ATP + H(+) = 3'-dephospho-CoA + diphosphate. It functions in the pathway cofactor biosynthesis; coenzyme A biosynthesis; CoA from (R)-pantothenate: step 4/5. In terms of biological role, reversibly transfers an adenylyl group from ATP to 4'-phosphopantetheine, yielding dephospho-CoA (dPCoA) and pyrophosphate. The protein is Phosphopantetheine adenylyltransferase of Borrelia garinii subsp. bavariensis (strain ATCC BAA-2496 / DSM 23469 / PBi) (Borreliella bavariensis).